The primary structure comprises 268 residues: Nickel import ATP-binding protein NikE (268 aa).

An ABC transporter domain is found at 4–252 (LNVCGLSHHY…SSDAGRVLQN (249 aa)). 45-52 (GRSGCGKS) provides a ligand contact to ATP.

The protein belongs to the ABC transporter superfamily. Nickel importer (TC 3.A.1.5.3) family. In terms of assembly, the complex is composed of two ATP-binding proteins (NikD and NikE), two transmembrane proteins (NikB and NikC) and a solute-binding protein (NikA).

The protein localises to the cell inner membrane. The catalysed reaction is Ni(2+)(out) + ATP + H2O = Ni(2+)(in) + ADP + phosphate + H(+). Part of the ABC transporter complex NikABCDE involved in nickel import. Responsible for energy coupling to the transport system. The polypeptide is Nickel import ATP-binding protein NikE (Shigella flexneri).